A 341-amino-acid chain; its full sequence is MAEFFATNLWPLIIVIGQSVLLLVLLLISIAYILLADRKIWAAVQLRRGPNVVGPWGLLQSFADLLKFVVKEPTVPSGANKGVFLLAPLVTCVLALAAWAVIPVNAGWVIADINVGVLYILAVSSLSVYGIIMAGWSSNSKYPFLAALRSAAQMVSYEVSIGFVVICVLLCVGSLNLTAIVEAQNSQWGMLGWYWLPLFPMFVVFYVSALAETNRPPFDLVEAESELVAGFMVEYSSTPYLLFMLGEYVAIVTMCAMGTILFLGGWLPPVPYAPFTWVPGIVWFALKVLFMFFLFAMAKAIVPRYRYDQLMRLGWKVFLPLSLAMVVIVAAVLQFAGLAPK.

8 helical membrane-spanning segments follow: residues 13-33 (IIVIGQSVLLLVLLLISIAYI), 82-102 (GVFLLAPLVTCVLALAAWAVI), 115-135 (VGVLYILAVSSLSVYGIIMAG), 161-181 (IGFVVICVLLCVGSLNLTAIV), 190-210 (MLGWYWLPLFPMFVVFYVSAL), 248-268 (YVAIVTMCAMGTILFLGGWLP), 277-297 (WVPGIVWFALKVLFMFFLFAM), and 317-337 (VFLPLSLAMVVIVAAVLQFAG).

Belongs to the complex I subunit 1 family. As to quaternary structure, NDH-1 is composed of 14 different subunits. Subunits NuoA, H, J, K, L, M, N constitute the membrane sector of the complex.

The protein resides in the cell inner membrane. It catalyses the reaction a quinone + NADH + 5 H(+)(in) = a quinol + NAD(+) + 4 H(+)(out). NDH-1 shuttles electrons from NADH, via FMN and iron-sulfur (Fe-S) centers, to quinones in the respiratory chain. The immediate electron acceptor for the enzyme in this species is believed to be ubiquinone. Couples the redox reaction to proton translocation (for every two electrons transferred, four hydrogen ions are translocated across the cytoplasmic membrane), and thus conserves the redox energy in a proton gradient. This subunit may bind ubiquinone. In Rhodopseudomonas palustris (strain BisB5), this protein is NADH-quinone oxidoreductase subunit H 2.